We begin with the raw amino-acid sequence, 302 residues long: tRNA dimethylallyltransferase (302 aa).

Residue 10–17 (GPTATGKS) participates in ATP binding. 12–17 (TATGKS) is a substrate binding site. The tract at residues 35–38 (DSRQ) is interaction with substrate tRNA.

This sequence belongs to the IPP transferase family. Monomer. The cofactor is Mg(2+).

The catalysed reaction is adenosine(37) in tRNA + dimethylallyl diphosphate = N(6)-dimethylallyladenosine(37) in tRNA + diphosphate. In terms of biological role, catalyzes the transfer of a dimethylallyl group onto the adenine at position 37 in tRNAs that read codons beginning with uridine, leading to the formation of N6-(dimethylallyl)adenosine (i(6)A). This is tRNA dimethylallyltransferase from Acaryochloris marina (strain MBIC 11017).